A 216-amino-acid chain; its full sequence is Ras-related protein Rab-5C (216 aa).

Residues Ser-30, Ala-31, Gly-33, Lys-34, Ser-35, Ser-36, His-47, Glu-48, Thr-53, and Gly-79 each contribute to the GTP site. Ser-35 lines the Mg(2+) pocket. 2 consecutive short sequence motifs (switch) follow at residues Gln-45–Ala-57 and Ala-78–Ala-94. Thr-53 provides a ligand contact to Mg(2+). A Phosphoserine modification is found at Ser-85. GTP is bound by residues Asn-134, Lys-135, Asp-137, Ala-165, and Lys-166. The tract at residues Asn-185–Asn-216 is disordered. Positions Gln-203 to Asn-216 are enriched in polar residues. Residues Cys-213 and Cys-214 are each lipidated (S-geranylgeranyl cysteine).

The protein belongs to the small GTPase superfamily. Rab family. Interacts with EEA1 and INCA1. Interacts with GDI1, GDI2, CHML and CHM; phosphorylation at Ser-85 disrupts this interaction. It depends on Mg(2+) as a cofactor. Phosphorylation of Ser-85 in the switch II region by LRRK2 prevents the association of RAB regulatory proteins, including CHM, CHML and RAB GDP dissociation inhibitors GDI1 and GDI2.

Its subcellular location is the cell membrane. The protein localises to the early endosome membrane. It is found in the melanosome. The enzyme catalyses GTP + H2O = GDP + phosphate + H(+). Regulated by guanine nucleotide exchange factors (GEFs) which promote the exchange of bound GDP for free GTP. Regulated by GTPase activating proteins (GAPs) which increase the GTP hydrolysis activity. Inhibited by GDP dissociation inhibitors (GDIs). The small GTPases Rab are key regulators of intracellular membrane trafficking, from the formation of transport vesicles to their fusion with membranes. Rabs cycle between an inactive GDP-bound form and an active GTP-bound form that is able to recruit to membranes different sets of downstream effectors directly responsible for vesicle formation, movement, tethering and fusion. The protein is Ras-related protein Rab-5C of Mus musculus (Mouse).